We begin with the raw amino-acid sequence, 737 residues long: Probable beta-glucosidase L (737 aa).

Residues 1 to 19 form the signal peptide; the sequence is MRSLIRSGALNAFLAASLA. Residue asparagine 225 is glycosylated (N-linked (GlcNAc...) asparagine). The active site involves aspartate 253. N-linked (GlcNAc...) asparagine glycans are attached at residues asparagine 340, asparagine 365, and asparagine 608.

It belongs to the glycosyl hydrolase 3 family.

It is found in the secreted. It carries out the reaction Hydrolysis of terminal, non-reducing beta-D-glucosyl residues with release of beta-D-glucose.. It functions in the pathway glycan metabolism; cellulose degradation. Functionally, beta-glucosidases are one of a number of cellulolytic enzymes involved in the degradation of cellulosic biomass. Catalyzes the last step releasing glucose from the inhibitory cellobiose. This Emericella nidulans (strain FGSC A4 / ATCC 38163 / CBS 112.46 / NRRL 194 / M139) (Aspergillus nidulans) protein is Probable beta-glucosidase L (bglL).